A 341-amino-acid polypeptide reads, in one-letter code: Anthranilate phosphoribosyltransferase (341 aa).

5-phospho-alpha-D-ribose 1-diphosphate contacts are provided by residues glycine 82, 85 to 86 (GD), threonine 90, 92 to 95 (NIST), 110 to 118 (KHGGRSVSG), and serine 122. Glycine 82 is an anthranilate binding site. Serine 94 provides a ligand contact to Mg(2+). Arginine 168 provides a ligand contact to anthranilate. Mg(2+) is bound by residues aspartate 227 and glutamate 228.

It belongs to the anthranilate phosphoribosyltransferase family. Homodimer. Requires Mg(2+) as cofactor.

It carries out the reaction N-(5-phospho-beta-D-ribosyl)anthranilate + diphosphate = 5-phospho-alpha-D-ribose 1-diphosphate + anthranilate. The protein operates within amino-acid biosynthesis; L-tryptophan biosynthesis; L-tryptophan from chorismate: step 2/5. Functionally, catalyzes the transfer of the phosphoribosyl group of 5-phosphorylribose-1-pyrophosphate (PRPP) to anthranilate to yield N-(5'-phosphoribosyl)-anthranilate (PRA). The polypeptide is Anthranilate phosphoribosyltransferase (Nitrosomonas europaea (strain ATCC 19718 / CIP 103999 / KCTC 2705 / NBRC 14298)).